We begin with the raw amino-acid sequence, 158 residues long: Glycine-rich RNA-binding protein 2, mitochondrial (158 aa).

Residues 1–34 (MAFCNKLGGLLRQNISSNGNVPVTSMLGSLRLMS) constitute a mitochondrion transit peptide. Positions 35–113 (TKLFIGGLSW…RHIRVNPAND (79 aa)) constitute an RRM domain. Ser43 is subject to Phosphoserine. Residues 122–157 (GGGGGYSGGGGGYGGGGGGYGGGGGGYGGGGDGGGG) form a glycine-rich (GR) required for cell-to-cell movement region.

It belongs to the GR-RBP family. In terms of assembly, binds to small phloem-mobile single-stranded RNAs (ss-sRNA, e.g. small interfering RNA (siRNA) and microRNA (miRNA)) in the phloeme exudate, including viral-derived sRNA (vsiRNA). Interacts with ORRM2, RBG3/ORRM3 and RBG5/ORRM4.

The protein resides in the mitochondrion. Its subcellular location is the secreted. In terms of biological role, promotes the cis-splicing and editing of several mitochondrial RNAs (including NAD5 transcripts). Plays a role in RNA transcription or processing during stress. Binds RNAs and DNAs sequence with a preference to single-stranded nucleic acids. Displays strong affinity to poly(U) sequence. Exerts cold and freezing tolerance, probably by exhibiting an RNA chaperone activity during the cold and freezing adaptation process. Mediates cell-to-cell trafficking of RNA interference (RNAi) signals (small RNAs (sRNA), e.g. small interfering RNA (siRNA) and microRNA (miRNA)) which regulate growth and development, as well as responses to environmental inputs, including pathogen attack; can compromise zucchini yellow mosaic virus (ZYMV) and tobacco rattle virus (TRV) infections at the early stage. This Arabidopsis thaliana (Mouse-ear cress) protein is Glycine-rich RNA-binding protein 2, mitochondrial.